The primary structure comprises 54 residues: ATP synthase F(0) complex subunit 8 (54 aa).

Residues 4–24 (LNPGPWFAILVFSWLIFLTII) traverse the membrane as a helical segment. Residues 35 to 54 (NEPTPVSAEKHKTESWDWPW) form a disordered region. The span at 42–54 (AEKHKTESWDWPW) shows a compositional bias: basic and acidic residues.

The protein belongs to the ATPase protein 8 family. As to quaternary structure, component of the ATP synthase complex composed at least of ATP5F1A/subunit alpha, ATP5F1B/subunit beta, ATP5MC1/subunit c (homooctomer), MT-ATP6/subunit a, MT-ATP8/subunit 8, ATP5ME/subunit e, ATP5MF/subunit f, ATP5MG/subunit g, ATP5MK/subunit k, ATP5MJ/subunit j, ATP5F1C/subunit gamma, ATP5F1D/subunit delta, ATP5F1E/subunit epsilon, ATP5PF/subunit F6, ATP5PB/subunit b, ATP5PD/subunit d, ATP5PO/subunit OSCP. ATP synthase complex consists of a soluble F(1) head domain (subunits alpha(3) and beta(3)) - the catalytic core - and a membrane F(0) domain - the membrane proton channel (subunits c, a, 8, e, f, g, k and j). These two domains are linked by a central stalk (subunits gamma, delta, and epsilon) rotating inside the F1 region and a stationary peripheral stalk (subunits F6, b, d, and OSCP).

The protein localises to the mitochondrion membrane. Functionally, subunit 8, of the mitochondrial membrane ATP synthase complex (F(1)F(0) ATP synthase or Complex V) that produces ATP from ADP in the presence of a proton gradient across the membrane which is generated by electron transport complexes of the respiratory chain. ATP synthase complex consist of a soluble F(1) head domain - the catalytic core - and a membrane F(1) domain - the membrane proton channel. These two domains are linked by a central stalk rotating inside the F(1) region and a stationary peripheral stalk. During catalysis, ATP synthesis in the catalytic domain of F(1) is coupled via a rotary mechanism of the central stalk subunits to proton translocation. In vivo, can only synthesize ATP although its ATP hydrolase activity can be activated artificially in vitro. Part of the complex F(0) domain. This Cyprinus carpio (Common carp) protein is ATP synthase F(0) complex subunit 8.